Consider the following 343-residue polypeptide: Anthranilate phosphoribosyltransferase (343 aa).

Residues glycine 81, 84-85, 91-94, 109-117, and serine 121 each bind 5-phospho-alpha-D-ribose 1-diphosphate; these read GD, NLST, and KHGNRSVSS. Position 81 (glycine 81) interacts with anthranilate. Serine 93 provides a ligand contact to Mg(2+). Asparagine 112 is a binding site for anthranilate. Arginine 167 contacts anthranilate. Mg(2+)-binding residues include aspartate 226 and glutamate 227.

Belongs to the anthranilate phosphoribosyltransferase family. Homodimer. It depends on Mg(2+) as a cofactor.

The catalysed reaction is N-(5-phospho-beta-D-ribosyl)anthranilate + diphosphate = 5-phospho-alpha-D-ribose 1-diphosphate + anthranilate. Its pathway is amino-acid biosynthesis; L-tryptophan biosynthesis; L-tryptophan from chorismate: step 2/5. In terms of biological role, catalyzes the transfer of the phosphoribosyl group of 5-phosphorylribose-1-pyrophosphate (PRPP) to anthranilate to yield N-(5'-phosphoribosyl)-anthranilate (PRA). This Cellvibrio japonicus (strain Ueda107) (Pseudomonas fluorescens subsp. cellulosa) protein is Anthranilate phosphoribosyltransferase.